A 511-amino-acid polypeptide reads, in one-letter code: Peroxisomal N(1)-acetyl-spermine/spermidine oxidase (511 aa).

Met-1 bears the N-acetylmethionine mark. FAD contacts are provided by residues Ala-24, Glu-45, Arg-53, and 69 to 70 (HW). Residues His-72 and Val-194 each coordinate substrate. Val-247 contacts FAD. A substrate-binding site is contributed by Asn-320. Residues Glu-472 and 481-482 (TT) each bind FAD. The Microbody targeting signal signature appears at 509 to 511 (PRL).

This sequence belongs to the flavin monoamine oxidase family. In terms of assembly, monomer. Requires FAD as cofactor. As to expression, widely expressed. Not detected in spleen. Expressed at lower level in neoplastic tissues.

It is found in the peroxisome. It localises to the cytoplasm. It catalyses the reaction N(1)-acetylspermine + O2 + H2O = 3-acetamidopropanal + spermidine + H2O2. The enzyme catalyses N(1)-acetylspermidine + O2 + H2O = 3-acetamidopropanal + putrescine + H2O2. The catalysed reaction is N(1),N(12)-diacetylspermine + O2 + H2O = 3-acetamidopropanal + N(1)-acetylspermidine + H2O2. Its pathway is amine and polyamine metabolism; spermine metabolism. Its function is as follows. Flavoenzyme which catalyzes the oxidation of N(1)-acetylspermine to spermidine and is thus involved in the polyamine back-conversion. Can also oxidize N(1)-acetylspermidine to putrescine. Substrate specificity: N(1)-acetylspermine = N(1)-acetylspermidine &gt; N(1),N(12)-diacylspermine &gt;&gt; spermine. Does not oxidize spermidine. Plays an important role in the regulation of polyamine intracellular concentration and has the potential to act as a determinant of cellular sensitivity to the antitumor polyamine analogs. This Homo sapiens (Human) protein is Peroxisomal N(1)-acetyl-spermine/spermidine oxidase (PAOX).